The following is a 208-amino-acid chain: Protein-L-isoaspartate O-methyltransferase (208 aa).

The active site involves S59.

Belongs to the methyltransferase superfamily. L-isoaspartyl/D-aspartyl protein methyltransferase family.

The protein localises to the cytoplasm. It catalyses the reaction [protein]-L-isoaspartate + S-adenosyl-L-methionine = [protein]-L-isoaspartate alpha-methyl ester + S-adenosyl-L-homocysteine. Functionally, catalyzes the methyl esterification of L-isoaspartyl residues in peptides and proteins that result from spontaneous decomposition of normal L-aspartyl and L-asparaginyl residues. It plays a role in the repair and/or degradation of damaged proteins. This Salmonella newport (strain SL254) protein is Protein-L-isoaspartate O-methyltransferase.